A 545-amino-acid chain; its full sequence is Cannabidiolic acid synthase-like 1 (545 aa).

Residues 1–28 form the signal peptide; it reads MKCSTFCFWYVCKIIFFFLSFNIQISIA. A disulfide bond links Cys37 and Cys99. N-linked (GlcNAc...) asparagine glycans are attached at residues Asn45, Asn65, Asn89, and Asn168. The region spanning 77–251 is the FAD-binding PCMH-type domain; sequence TTPKPLVIIT…AAWKIRLVAV (175 aa). Residues 114–176 constitute a cross-link (6-(S-cysteinyl)-8alpha-(pros-histidyl)-FAD (His-Cys)); it reads HDAEGMSYIS…ENLSFPAGYC (63 aa). Residue His292 coordinates substrate. N-linked (GlcNAc...) asparagine glycosylation is found at Asn297, Asn305, Asn329, and Asn361. Substrate is bound at residue Tyr417. Asn467 is a glycosylation site (N-linked (GlcNAc...) asparagine). Residue Tyr484 is the Proton acceptor of the active site. N-linked (GlcNAc...) asparagine glycosylation is present at Asn499.

It belongs to the oxygen-dependent FAD-linked oxidoreductase family. The cofactor is FAD. The FAD cofactor is bound via a bicovalent 6-S-cysteinyl, 8alpha-N1-histidyl FAD linkage.

It is found in the secreted. In terms of biological role, has no cannabidiolic acid synthase activity. This is Cannabidiolic acid synthase-like 1 (CBDAS2) from Cannabis sativa (Hemp).